Here is a 503-residue protein sequence, read N- to C-terminus: Cobyric acid synthase (503 aa).

The region spanning 255–444 (AIDVAVIRCP…MHDLFHNDAF (190 aa)) is the GATase cobBQ-type domain. Cys337 serves as the catalytic Nucleophile. His436 is an active-site residue.

This sequence belongs to the CobB/CobQ family. CobQ subfamily.

Its pathway is cofactor biosynthesis; adenosylcobalamin biosynthesis. Its function is as follows. Catalyzes amidations at positions B, D, E, and G on adenosylcobyrinic A,C-diamide. NH(2) groups are provided by glutamine, and one molecule of ATP is hydrogenolyzed for each amidation. This chain is Cobyric acid synthase, found in Geobacillus kaustophilus (strain HTA426).